The chain runs to 179 residues: MLSPKRTKFRKQQRGRMRGVATRGNKIAFGQFALQAQECGWITSRQIEASRRAMTRYVKRGGQIWIRIFPDKPVTMRPAETRMGSGKGNPEFWVAVIKPGRILFEMGGEEITESIAREAMRLAQYKLPIKTKFIALAEGETPTQVGKASSASLANLDEDANSQTDDETSSSGSVATVES.

Positions K147–S179 are disordered. Over residues L156–T168 the composition is skewed to acidic residues. The segment covering S169–S179 has biased composition (polar residues).

The protein belongs to the universal ribosomal protein uL16 family. Part of the 50S ribosomal subunit.

Functionally, binds 23S rRNA and is also seen to make contacts with the A and possibly P site tRNAs. This is Large ribosomal subunit protein uL16 from Prochlorococcus marinus (strain MIT 9211).